A 68-amino-acid polypeptide reads, in one-letter code: Conotoxin Eb11.7 (68 aa).

The first 26 residues, 1–26, serve as a signal peptide directing secretion; that stretch reads MMFRLTSVSCFLLVIVCLNLFQVVLT. 4 disulfides stabilise this stretch: cysteine 29–cysteine 43, cysteine 36–cysteine 48, cysteine 42–cysteine 52, and cysteine 47–cysteine 56. Phenylalanine 60 carries the phenylalanine amide modification. Positions 64-68 are excised as a propeptide; it reads ATFQE.

It belongs to the conotoxin I2 superfamily. Expressed by the venom duct.

It localises to the secreted. The sequence is that of Conotoxin Eb11.7 from Conus eburneus (Ivory cone).